The sequence spans 115 residues: NAD(P)H-quinone oxidoreductase subunit M (115 aa).

Belongs to the complex I NdhM subunit family. As to quaternary structure, NDH-1 can be composed of about 15 different subunits; different subcomplexes with different compositions have been identified which probably have different functions.

Its subcellular location is the cellular thylakoid membrane. The catalysed reaction is a plastoquinone + NADH + (n+1) H(+)(in) = a plastoquinol + NAD(+) + n H(+)(out). The enzyme catalyses a plastoquinone + NADPH + (n+1) H(+)(in) = a plastoquinol + NADP(+) + n H(+)(out). NDH-1 shuttles electrons from an unknown electron donor, via FMN and iron-sulfur (Fe-S) centers, to quinones in the respiratory and/or the photosynthetic chain. The immediate electron acceptor for the enzyme in this species is believed to be plastoquinone. Couples the redox reaction to proton translocation, and thus conserves the redox energy in a proton gradient. Cyanobacterial NDH-1 also plays a role in inorganic carbon-concentration. In Synechococcus sp. (strain WH7803), this protein is NAD(P)H-quinone oxidoreductase subunit M.